A 278-amino-acid polypeptide reads, in one-letter code: Large ribosomal subunit protein uL2 (278 aa).

The tract at residues 222–278 (GVVMNPIDHPHGGGEGRTSGGRHPVTPWGKPTKGKKTRSNKSTNKFILISRHKRKKK) is disordered.

Belongs to the universal ribosomal protein uL2 family. As to quaternary structure, part of the 50S ribosomal subunit. Forms a bridge to the 30S subunit in the 70S ribosome.

In terms of biological role, one of the primary rRNA binding proteins. Required for association of the 30S and 50S subunits to form the 70S ribosome, for tRNA binding and peptide bond formation. It has been suggested to have peptidyltransferase activity; this is somewhat controversial. Makes several contacts with the 16S rRNA in the 70S ribosome. The polypeptide is Large ribosomal subunit protein uL2 (Afipia carboxidovorans (strain ATCC 49405 / DSM 1227 / KCTC 32145 / OM5) (Oligotropha carboxidovorans)).